We begin with the raw amino-acid sequence, 1588 residues long: Pentafunctional AROM polypeptide (1588 aa).

The 3-dehydroquinate synthase stretch occupies residues 1-392 (MVQLAKVPIL…YGDSAQFVSD (392 aa)). NAD(+)-binding positions include 43–45 (DTN), 78–81 (ETSK), 109–111 (GGV), and Asp114. Arg125 provides a ligand contact to 7-phospho-2-dehydro-3-deoxy-D-arabino-heptonate. NAD(+) is bound at residue 134-135 (TS). 7-phospho-2-dehydro-3-deoxy-D-arabino-heptonate is bound by residues Asp141 and Lys147. Residue Lys156 coordinates NAD(+). Asn157 contributes to the 7-phospho-2-dehydro-3-deoxy-D-arabino-heptonate binding site. NAD(+) contacts are provided by residues 174-177 (WLET) and Asn185. Glu189 serves as a coordination point for Zn(2+). 7-phospho-2-dehydro-3-deoxy-D-arabino-heptonate contacts are provided by residues 189 to 192 (EVIK) and Lys258. Residue Glu268 is the Proton acceptor; for 3-dehydroquinate synthase activity of the active site. 7-phospho-2-dehydro-3-deoxy-D-arabino-heptonate-binding positions include 272–276 (RNLLN) and His279. His279 is a Zn(2+) binding site. Catalysis depends on His283, which acts as the Proton acceptor; for 3-dehydroquinate synthase activity. 7-phospho-2-dehydro-3-deoxy-D-arabino-heptonate is bound by residues His295 and Lys364. His295 is a binding site for Zn(2+). The segment at 405 to 871 (VYPFKDIPAD…WDVLHSELGA (467 aa)) is EPSP synthase. The active-site For EPSP synthase activity is Cys853. Residues 890–1080 (SVVIIGMRAA…IPSGRSAFVC (191 aa)) are shikimate kinase. Residue 895 to 902 (GMRAAGKT) participates in ATP binding. Residues 1081 to 1293 (LTFDDLTEQT…AAPGQLTVAQ (213 aa)) are 3-dehydroquinase. Residue His1198 is the Proton acceptor; for 3-dehydroquinate dehydratase activity of the active site. The active-site Schiff-base intermediate with substrate; for 3-dehydroquinate dehydratase activity is Lys1227. The tract at residues 1306–1588 (PKELFVVGKP…KAIFDAVTKE (283 aa)) is shikimate dehydrogenase.

This sequence in the N-terminal section; belongs to the sugar phosphate cyclases superfamily. Dehydroquinate synthase family. The protein in the 2nd section; belongs to the EPSP synthase family. In the 3rd section; belongs to the shikimate kinase family. It in the 4th section; belongs to the type-I 3-dehydroquinase family. This sequence in the C-terminal section; belongs to the shikimate dehydrogenase family. In terms of assembly, homodimer. Zn(2+) is required as a cofactor.

The protein resides in the cytoplasm. The catalysed reaction is 7-phospho-2-dehydro-3-deoxy-D-arabino-heptonate = 3-dehydroquinate + phosphate. It catalyses the reaction 3-dehydroquinate = 3-dehydroshikimate + H2O. The enzyme catalyses shikimate + NADP(+) = 3-dehydroshikimate + NADPH + H(+). It carries out the reaction shikimate + ATP = 3-phosphoshikimate + ADP + H(+). The catalysed reaction is 3-phosphoshikimate + phosphoenolpyruvate = 5-O-(1-carboxyvinyl)-3-phosphoshikimate + phosphate. Its pathway is metabolic intermediate biosynthesis; chorismate biosynthesis; chorismate from D-erythrose 4-phosphate and phosphoenolpyruvate: step 2/7. The protein operates within metabolic intermediate biosynthesis; chorismate biosynthesis; chorismate from D-erythrose 4-phosphate and phosphoenolpyruvate: step 3/7. It participates in metabolic intermediate biosynthesis; chorismate biosynthesis; chorismate from D-erythrose 4-phosphate and phosphoenolpyruvate: step 4/7. It functions in the pathway metabolic intermediate biosynthesis; chorismate biosynthesis; chorismate from D-erythrose 4-phosphate and phosphoenolpyruvate: step 5/7. Its pathway is metabolic intermediate biosynthesis; chorismate biosynthesis; chorismate from D-erythrose 4-phosphate and phosphoenolpyruvate: step 6/7. Its function is as follows. The AROM polypeptide catalyzes 5 consecutive enzymatic reactions in prechorismate polyaromatic amino acid biosynthesis. This chain is Pentafunctional AROM polypeptide, found in Saccharomyces cerevisiae (strain JAY291) (Baker's yeast).